The chain runs to 373 residues: Histidine protein methyltransferase 1 homolog (373 aa).

The segment covering 30–42 has biased composition (basic and acidic residues); the sequence is SKESLVSERQKGT. Disordered stretches follow at residues 30 to 52 and 64 to 94; these read SKES…STEQ and KSER…HEEK. Positions 70 to 88 are enriched in polar residues; sequence APSQDPDSSFGAANSSSNL. Phosphoserine occurs at positions 72 and 77. His154 carries the tele-methylhistidine modification. S-adenosyl-L-methionine-binding positions include 168-172, Gly195, and 216-218; these read IWECT and QDY. The Nuclear localization signal motif lies at 247-253; that stretch reads PDVKRLR. Residues 269–271 and Ser294 each bind S-adenosyl-L-methionine; that span reads GEW.

The protein belongs to the methyltransferase superfamily. METTL18 family. In terms of assembly, interacts with GRWD1 and members of the heat shock protein 90 and 70 families; these proteins may possibly be methylation substrates for the enzyme. Post-translationally, monomethylated at His-154 through automethylation. Automethylation at His-154 positively regulates the methyltransferase activity toward RPL3. Probably methylated on other residues.

It localises to the cytoplasm. It is found in the cytosol. Its subcellular location is the nucleus. The protein localises to the nucleolus. It catalyses the reaction L-histidyl-[protein] + S-adenosyl-L-methionine = N(tele)-methyl-L-histidyl-[protein] + S-adenosyl-L-homocysteine + H(+). In terms of biological role, protein-L-histidine N-tele-methyltransferase that specifically monomethylates RPL3, thereby regulating translation elongation. Histidine methylation of RPL3 regulates translation elongation by slowing ribosome traversal on tyrosine codons: slower elongation provides enough time for proper folding of synthesized proteins and prevents cellular aggregation of tyrosine-rich proteins. This is Histidine protein methyltransferase 1 homolog (METTL18) from Bos taurus (Bovine).